The chain runs to 616 residues: Methylmalonyl-CoA mutase small subunit (616 aa).

It belongs to the methylmalonyl-CoA mutase family. Heterodimer of an alpha and a beta chain. Adenosylcob(III)alamin is required as a cofactor.

It carries out the reaction (R)-methylmalonyl-CoA = succinyl-CoA. Its pathway is metabolic intermediate metabolism; propanoyl-CoA degradation; succinyl-CoA from propanoyl-CoA: step 3/3. In terms of biological role, catalyzes the isomerization of succinyl-CoA to methylmalonyl-CoA during synthesis of propionate from tricarboxylic acid-cycle intermediates. This conversion most likely represents an important source of building blocks for polyketide antibiotic biosynthesis. It is unable to catalyze the conversion of isobutyryl-CoA into N-butyryl-CoA. The protein is Methylmalonyl-CoA mutase small subunit (mutA) of Streptomyces virginiae (Streptomyces cinnamonensis).